The chain runs to 415 residues: Histidine--tRNA ligase (415 aa).

This sequence belongs to the class-II aminoacyl-tRNA synthetase family. In terms of assembly, homodimer.

It localises to the cytoplasm. The catalysed reaction is tRNA(His) + L-histidine + ATP = L-histidyl-tRNA(His) + AMP + diphosphate + H(+). The chain is Histidine--tRNA ligase from Rhodospirillum rubrum (strain ATCC 11170 / ATH 1.1.1 / DSM 467 / LMG 4362 / NCIMB 8255 / S1).